A 457-amino-acid chain; its full sequence is tRNA (guanine(37)-N(1))-methyltransferase (457 aa).

S-adenosyl-L-methionine is bound by residues His240, 278-279 (DL), 306-307 (DG), and Asn338.

The protein belongs to the class I-like SAM-binding methyltransferase superfamily. TRM5/TYW2 family. As to quaternary structure, monomer.

It is found in the mitochondrion matrix. The protein resides in the nucleus. It localises to the cytoplasm. It carries out the reaction guanosine(37) in tRNA + S-adenosyl-L-methionine = N(1)-methylguanosine(37) in tRNA + S-adenosyl-L-homocysteine + H(+). In terms of biological role, specifically methylates the N1 position of guanosine-37 in various cytoplasmic and mitochondrial tRNAs. Methylation is not dependent on the nature of the nucleoside 5' of the target nucleoside. This is the first step in the biosynthesis of wybutosine (yW), a modified base adjacent to the anticodon of tRNAs and required for accurate decoding. This chain is tRNA (guanine(37)-N(1))-methyltransferase, found in Drosophila melanogaster (Fruit fly).